The sequence spans 643 residues: Cell pattern formation-associated protein asm-1 (643 aa).

The segment at 1 to 37 is disordered; that stretch reads MNPNTPADVYYGQMSQGSSMPVTTVPSHSHYASQQPP. The segment covering 13-33 has biased composition (polar residues); sequence QMSQGSSMPVTTVPSHSHYAS. An HTH APSES-type domain is found at 116 to 222; sequence RVTATLWEDE…HNIGALLYHP (107 aa). Positions 150-171 form a DNA-binding region, H-T-H motif; it reads GTKLLNVAGMTRGRRDGILKSE. The interval 229 to 627 is disordered; sequence SQVMAAAEQR…GSLPSPTYTA (399 aa). A compositionally biased stretch (polar residues) spans 306-335; sequence DGYQWSQQSMSGTQGNSSLSLDTSLGSNAR. Positions 336–349 are enriched in low complexity; sequence SMPSTPATTPPGST. A compositionally biased stretch (polar residues) spans 350–367; it reads IQSMQNYPPVSQSYESSR. A compositionally biased stretch (low complexity) spans 368–391; that stretch reads QMYQGQSAQQAQYQSQQHYSSQPQ. Polar residues-rich tracts occupy residues 471-481, 529-551, and 563-577; these read GSYNYNTQAVN, QPSS…TQGN, and SLPN…VMNG. The nuclear localization domain stretch occupies residues 583–612; the sequence is KRGRDDDDDGGRPTTSAPNLGPGMDMKRRK.

The protein belongs to the EFG1/PHD1/stuA family.

The protein resides in the nucleus. Transcription factor that regulates asexual reproduction. Binds the StuA-response elements (StRE) with the consensus sequence 5'-(A/T)CGCG(T/A)N(A/C)-3' at the promoters of target genes. Required for rapid conidial germination, normal vegetative morphology, and protoperithecium formation. This chain is Cell pattern formation-associated protein asm-1, found in Neurospora crassa (strain ATCC 24698 / 74-OR23-1A / CBS 708.71 / DSM 1257 / FGSC 987).